A 172-amino-acid polypeptide reads, in one-letter code: RNA silencing suppressor p19 (172 aa).

The span at 1-20 (MERVIQGNDAREQANGERWD) shows a compositional bias: basic and acidic residues. The disordered stretch occupies residues 1–37 (MERVIQGNDAREQANGERWDGGSGGTTSGFKLPDESP).

It belongs to the tombusvirus protein p19 family. Homodimer.

Its function is as follows. Viral suppressor of RNA silencing which binds specifically to silencing RNAs (siRNAs). Acts as a molecular caliper to specifically select siRNAs based on the length of the duplex region of the RNA. This Cynara cardunculus var. scolymus (Globe artichoke) protein is RNA silencing suppressor p19.